Here is a 31-residue protein sequence, read N- to C-terminus: Cycloviolacin-O6 (31 aa).

A cross-link (cyclopeptide (Gly-Asn)) is located at residues 1–31 (GTLPCGESCVWIPCISAAVGCSCKSKVCYKN). 3 disulfide bridges follow: C5–C21, C9–C23, and C14–C28.

This is a cyclic peptide.

In terms of biological role, probably participates in a plant defense mechanism. This Viola odorata (Sweet violet) protein is Cycloviolacin-O6.